A 254-amino-acid chain; its full sequence is Imidazole glycerol phosphate synthase subunit HisF (254 aa).

Active-site residues include Asp-11 and Asp-130.

The protein belongs to the HisA/HisF family. In terms of assembly, heterodimer of HisH and HisF.

Its subcellular location is the cytoplasm. The catalysed reaction is 5-[(5-phospho-1-deoxy-D-ribulos-1-ylimino)methylamino]-1-(5-phospho-beta-D-ribosyl)imidazole-4-carboxamide + L-glutamine = D-erythro-1-(imidazol-4-yl)glycerol 3-phosphate + 5-amino-1-(5-phospho-beta-D-ribosyl)imidazole-4-carboxamide + L-glutamate + H(+). The protein operates within amino-acid biosynthesis; L-histidine biosynthesis; L-histidine from 5-phospho-alpha-D-ribose 1-diphosphate: step 5/9. Functionally, IGPS catalyzes the conversion of PRFAR and glutamine to IGP, AICAR and glutamate. The HisF subunit catalyzes the cyclization activity that produces IGP and AICAR from PRFAR using the ammonia provided by the HisH subunit. The protein is Imidazole glycerol phosphate synthase subunit HisF of Halorhodospira halophila (strain DSM 244 / SL1) (Ectothiorhodospira halophila (strain DSM 244 / SL1)).